A 453-amino-acid chain; its full sequence is Macrophage scavenger receptor types I and II (453 aa).

Topologically, residues 1–50 (MAQWDDFPDQQEDTDSCTESVKFDARSVTALLPPHPKNGPTLQERMKSYK) are cytoplasmic. At S27 the chain carries Phosphoserine. A helical; Signal-anchor for type II membrane protein transmembrane segment spans residues 51-76 (TALITLYLIVFVVLVPIIGIVAAQLL). The spacer stretch occupies residues 77-108 (KWETKNCTVGSVNADISPSPEGKGNGSEDEMR). At 77–453 (KWETKNCTVG…DEDAGVTCTT (377 aa)) the chain is on the extracellular side. N-linked (GlcNAc...) asparagine glycosylation is found at N82, N101, N142, N183, N220, N248, and N266. A coiled-coil region spans residues 194-255 (ETLNGRVQEN…LNNITNDLRL (62 aa)). 2 disordered regions span residues 267 to 295 (ITLLQGPPGPPGEKGDRGPPGQNGIPGFP) and 313 to 349 (PGVRGFPGPMGKTGKPGLNGQKGQKGEKGSGSMQRQS). Residues 272–343 (GPPGPPGEKG…KGQKGEKGSG (72 aa)) form the Collagen-like domain. An SRCR domain is found at 352-452 (VRLVGGSGPH…HDEDAGVTCT (101 aa)). Disulfide bonds link C377–C441, C390–C451, and C421–C431.

In terms of assembly, homotrimer. Interacts with MYO18A.

Its subcellular location is the membrane. Membrane glycoproteins implicated in the pathologic deposition of cholesterol in arterial walls during atherogenesis. Two types of receptor subunits exist. These receptors mediate the endocytosis of a diverse group of macromolecules, including modified low density lipoproteins (LDL). The chain is Macrophage scavenger receptor types I and II (MSR1) from Bos taurus (Bovine).